The following is a 106-amino-acid chain: MVNIPKTRNTYCKGKGCRKHTIHKVTQYKAGRASLFAQGKRRYDRKQSGYGGQTKQVFHKKAKTTKKIVLKLECTVCKTKKQLPLKRCKHIELGGEKKQKGQALQF.

Belongs to the eukaryotic ribosomal protein eL42 family.

This chain is Large ribosomal subunit protein eL42 (RPL44), found in Candida tropicalis (Yeast).